The sequence spans 285 residues: MQKFLGVLTILVCVFGGYMWAGGKLGAIWQPAEFLIIIGAAAGSLIIGNPPHVLKEMRQQVPATIKGPTEEYEYYMELMALLNNLLETARSRGFKFLDSHIEAPEQSSIFLMYPLVSEDHRLISFITDNLRLMAMGQMSPHELEGLLEQEIEAIQNELLLPSRSLQRTAEALPGFGILAAVGGIIITMQAIDGSIALIGYHVAAALVGTFIGIFGCYCGLDPLSNAMAQRVKRNMTAFECVRATLVAYVAKKPTLLAIDAGRKHIQLDIKPTFNQMEKWLAEQEG.

Transmembrane regions (helical) follow at residues 4–23 (FLGV…WAGG), 34–51 (FLII…GNPP), 171–191 (ALPG…MQAI), and 201–222 (HVAA…GLDP). Residues 223–285 (LSNAMAQRVK…MEKWLAEQEG (63 aa)) lie on the Cytoplasmic side of the membrane.

It belongs to the MotA family.

It is found in the cell inner membrane. Its function is as follows. Required for rotation of the flagellar motor. Probable transmembrane proton channel. The polypeptide is Chemotaxis protein LafT (lafT) (Vibrio parahaemolyticus serotype O3:K6 (strain RIMD 2210633)).